The sequence spans 500 residues: Aldehyde dehydrogenase (500 aa).

246-251 (GSTLVG) contacts NAD(+). Glu-269 (proton acceptor) is an active-site residue. Cys-303 (nucleophile) is an active-site residue.

The protein belongs to the aldehyde dehydrogenase family.

The enzyme catalyses an aldehyde + NAD(+) + H2O = a carboxylate + NADH + 2 H(+). Its pathway is alcohol metabolism; ethanol degradation; acetate from ethanol: step 2/2. This Agaricus bisporus (White button mushroom) protein is Aldehyde dehydrogenase (aldA).